Reading from the N-terminus, the 308-residue chain is Ribonuclease HIII (308 aa).

The RNase H type-2 domain maps to 88–304 (FHCIGSDEAG…RDKAIHLMNQ (217 aa)). Residues aspartate 94, glutamate 95, and aspartate 199 each coordinate a divalent metal cation.

It belongs to the RNase HII family. RnhC subfamily. Mn(2+) serves as cofactor. Mg(2+) is required as a cofactor.

It localises to the cytoplasm. It carries out the reaction Endonucleolytic cleavage to 5'-phosphomonoester.. Endonuclease that specifically degrades the RNA of RNA-DNA hybrids. The chain is Ribonuclease HIII from Staphylococcus epidermidis (strain ATCC 12228 / FDA PCI 1200).